Reading from the N-terminus, the 83-residue chain is Large ribosomal subunit protein bL31B (83 aa).

Belongs to the bacterial ribosomal protein bL31 family. Type B subfamily. In terms of assembly, part of the 50S ribosomal subunit.

Its function is as follows. Binds the 23S rRNA. This chain is Large ribosomal subunit protein bL31B, found in Lactobacillus delbrueckii subsp. bulgaricus (strain ATCC 11842 / DSM 20081 / BCRC 10696 / JCM 1002 / NBRC 13953 / NCIMB 11778 / NCTC 12712 / WDCM 00102 / Lb 14).